Here is a 73-residue protein sequence, read N- to C-terminus: U-scoloptoxin(15)-Sm2a (73 aa).

The signal sequence occupies residues 1–20 (MKFYIVFCLFVVLLINFAAA). Intrachain disulfides connect C39–C66 and C43–C68.

Belongs to the scoloptoxin-15 family. As to expression, expressed by the venom gland.

Its subcellular location is the secreted. Activity unknown, even that a lot of targets (Kv, Nav, Cav) have been tested and activities on insects and mice have been tested. This chain is U-scoloptoxin(15)-Sm2a, found in Scolopendra morsitans (Tanzanian blue ringleg centipede).